The primary structure comprises 278 residues: HTH-type transcriptional regulator HdfR (278 aa).

In terms of domain architecture, HTH lysR-type spans 1-58; it reads MDTELLKTFLEVSRTRHFGRAAEALYLTQSAVSFRIRQLENQLGVNLFTRHRNNIRLT. Positions 18–37 form a DNA-binding region, H-T-H motif; the sequence is FGRAAEALYLTQSAVSFRIR.

It belongs to the LysR transcriptional regulatory family.

Negatively regulates the transcription of the flagellar master operon flhDC by binding to the upstream region of the operon. This Salmonella schwarzengrund (strain CVM19633) protein is HTH-type transcriptional regulator HdfR.